Here is a 776-residue protein sequence, read N- to C-terminus: A-type ATP synthase subunit A (776 aa).

The protein belongs to the ATPase alpha/beta chains family. In terms of assembly, has multiple subunits with at least A(3), B(3), C, D, E, F, H, I and proteolipid K(x). This protein undergoes a protein self splicing that involves a post-translational excision of the VDE intervening region (intein) followed by peptide ligation.

It is found in the cell membrane. It catalyses the reaction ATP + H2O + 4 H(+)(in) = ADP + phosphate + 5 H(+)(out). In terms of biological role, component of the A-type ATP synthase that produces ATP from ADP in the presence of a proton gradient across the membrane. The A chain is the catalytic subunit. The sequence is that of A-type ATP synthase subunit A from Thermoplasma volcanium (strain ATCC 51530 / DSM 4299 / JCM 9571 / NBRC 15438 / GSS1).